Here is a 101-residue protein sequence, read N- to C-terminus: Defensin-like protein 222 (101 aa).

The signal sequence occupies residues 1 to 21 (MRTIVLFSTLMILVLSCMSNA). Disulfide bonds link cysteine 68–cysteine 85, cysteine 71–cysteine 90, and cysteine 75–cysteine 92.

This sequence belongs to the DEFL family.

The protein localises to the secreted. In Arabidopsis thaliana (Mouse-ear cress), this protein is Defensin-like protein 222.